We begin with the raw amino-acid sequence, 283 residues long: ATP phosphoribosyltransferase (283 aa).

The protein belongs to the ATP phosphoribosyltransferase family. Long subfamily. The cofactor is Mg(2+).

It is found in the cytoplasm. It catalyses the reaction 1-(5-phospho-beta-D-ribosyl)-ATP + diphosphate = 5-phospho-alpha-D-ribose 1-diphosphate + ATP. It participates in amino-acid biosynthesis; L-histidine biosynthesis; L-histidine from 5-phospho-alpha-D-ribose 1-diphosphate: step 1/9. With respect to regulation, feedback inhibited by histidine. Its function is as follows. Catalyzes the condensation of ATP and 5-phosphoribose 1-diphosphate to form N'-(5'-phosphoribosyl)-ATP (PR-ATP). Has a crucial role in the pathway because the rate of histidine biosynthesis seems to be controlled primarily by regulation of HisG enzymatic activity. This Bacteroides thetaiotaomicron (strain ATCC 29148 / DSM 2079 / JCM 5827 / CCUG 10774 / NCTC 10582 / VPI-5482 / E50) protein is ATP phosphoribosyltransferase.